We begin with the raw amino-acid sequence, 597 residues long: Protein Spindly (597 aa).

M1 bears the N-acetylmethionine mark. A coiled-coil region spans residues 1 to 445 (MEADITNLRN…LKLKYEPEER (445 aa)). S508 and S547 each carry phosphoserine. The tract at residues 531–597 (PASTEVLHEQ…STPEMQCPQQ (67 aa)) is disordered. A compositionally biased stretch (polar residues) spans 540–549 (QSGNTPSSPR). The span at 550-574 (LTEESRLPTKVKERKEATSKLEKGA) shows a compositional bias: basic and acidic residues. A compositionally biased stretch (polar residues) spans 583–597 (YVSSKSTPEMQCPQQ).

This sequence belongs to the Spindly family. Interacts with KNTC1 and ZW10. These interactions appear weak and may be transient or indirect. Interacts with dynein intermediate chain and dynactin (DCTN1). Interacts with the catalytically active form of USP45. Post-translationally, monoubiquitinated with'Lys-48' linkage. Deubiquitinated by USP45.

It is found in the cytoplasm. Its subcellular location is the cytoskeleton. The protein localises to the microtubule organizing center. It localises to the centrosome. The protein resides in the chromosome. It is found in the centromere. Its subcellular location is the kinetochore. The protein localises to the nucleus. It localises to the spindle pole. Functionally, required for the localization of dynein and dynactin to the mitotic kintochore. Dynein is believed to control the initial lateral interaction between the kinetochore and spindle microtubules and to facilitate the subsequent formation of end-on kinetochore-microtubule attachments mediated by the NDC80 complex. Also required for correct spindle orientation. Does not appear to be required for the removal of spindle assembly checkpoint (SAC) proteins from the kinetochore upon bipolar spindle attachment. Acts as an adapter protein linking the dynein motor complex to various cargos and converts dynein from a non-processive to a highly processive motor in the presence of dynactin. Facilitates the interaction between dynein and dynactin and activates dynein processivity (the ability to move along a microtubule for a long distance without falling off the track). Plays a role in cell migration. The sequence is that of Protein Spindly (Spdl1) from Rattus norvegicus (Rat).